We begin with the raw amino-acid sequence, 986 residues long: Translation initiation factor IF-2 (986 aa).

The span at 49–59 (EFAKDNAKGDS) shows a compositional bias: basic and acidic residues. Residues 49–370 (EFAKDNAKGD…KNRLAKRHEY (322 aa)) are disordered. Positions 60-112 (KPASSAQKPAAKPVQQRRPAAPSAPASTSSSAPTPAAPARQASPASAHQQAPT) are enriched in low complexity. The span at 135–168 (GQHDNRENGRDNREGRENGRQSRPNDRRNNDRRN) shows a compositional bias: basic and acidic residues. Positions 170–182 (QGRPNNGQPGQHQ) are enriched in low complexity. 2 stretches are compositionally biased toward gly residues: residues 254 to 286 (GRGG…GGPR) and 296 to 353 (GQGG…GRQG). The segment covering 357–366 (SKARKNRLAK) has biased composition (basic residues). The tr-type G domain maps to 479-651 (PRPPVVTVMG…VLLTADAELD (173 aa)). The tract at residues 488-495 (GHVDHGKT) is G1. 488-495 (GHVDHGKT) contributes to the GTP binding site. The G2 stretch occupies residues 513-517 (GITQR). The tract at residues 538 to 541 (DTPG) is G3. GTP is bound by residues 538 to 542 (DTPGH) and 592 to 595 (NKID). Residues 592–595 (NKID) are G4. The tract at residues 628-630 (SAK) is G5.

Belongs to the TRAFAC class translation factor GTPase superfamily. Classic translation factor GTPase family. IF-2 subfamily.

It localises to the cytoplasm. One of the essential components for the initiation of protein synthesis. Protects formylmethionyl-tRNA from spontaneous hydrolysis and promotes its binding to the 30S ribosomal subunits. Also involved in the hydrolysis of GTP during the formation of the 70S ribosomal complex. This Bifidobacterium longum subsp. infantis (strain ATCC 15697 / DSM 20088 / JCM 1222 / NCTC 11817 / S12) protein is Translation initiation factor IF-2.